The sequence spans 239 residues: Ribosomal RNA small subunit methyltransferase G (239 aa).

S-adenosyl-L-methionine is bound by residues glycine 77, phenylalanine 82, 128–129 (AE), and arginine 147.

It belongs to the methyltransferase superfamily. RNA methyltransferase RsmG family.

The protein localises to the cytoplasm. In terms of biological role, specifically methylates the N7 position of guanine in position 535 of 16S rRNA. The polypeptide is Ribosomal RNA small subunit methyltransferase G (Bacillus cereus (strain AH187)).